The sequence spans 433 residues: KICSTOR complex protein ITFG2 (433 aa).

An FG-GAP 1; atypical repeat occupies 19–48 (FPHAICLGDVDNDTLNELVVGDTSGKVSVY). Phosphoserine is present on serine 104. One copy of the FG-GAP 2; atypical repeat lies at 126 to 155 (NTKVMLISDIDGDGCRELVVGYTDRVVRAF). At serine 220 the chain carries Phosphoserine.

In terms of assembly, part of the KICSTOR complex composed of KPTN, ITFG2, KICS2 and SZT2. SZT2 probably serves as a link between the other three proteins in the KICSTOR complex and may mediate the direct interaction with the GATOR complex via GATOR1. The KICSTOR complex interacts directly with the GATOR1 complex and most probably indirectly with the GATOR2 complex in an amino acid-independent manner.

The protein resides in the lysosome membrane. Its function is as follows. As part of the KICSTOR complex functions in the amino acid-sensing branch of the TORC1 signaling pathway. Recruits, in an amino acid-independent manner, the GATOR1 complex to the lysosomal membranes and allows its interaction with GATOR2 and the RAG GTPases. Functions upstream of the RAG GTPases and is required to negatively regulate mTORC1 signaling in absence of amino acids. In absence of the KICSTOR complex mTORC1 is constitutively localized to the lysosome and activated. The KICSTOR complex is also probably involved in the regulation of mTORC1 by glucose. The protein is KICSTOR complex protein ITFG2 of Pongo abelii (Sumatran orangutan).